We begin with the raw amino-acid sequence, 1006 residues long: 5'-3' exoribonuclease 2 (1006 aa).

Coiled-coil stretches lie at residues 256-287 (FAQDNRKRNNLKDTINMTEEEKQFLQKQNSEQ) and 453-544 (RLKK…AESE). Residues 492-529 (DDAVSKANKTNFNLAEVMKQKIINKKHRLEKDNEEEEI) form a required for retention in the nucleus region. Positions 561-575 (DRENSETTEVSRDSP) are enriched in basic and acidic residues. Disordered regions lie at residues 561–584 (DRENSETTEVSRDSPVHSTVNVSE) and 939–1006 (HNYG…ANRR). Position 574 is a phosphoserine (S574). A compositionally biased stretch (polar residues) spans 939 to 956 (HNYGRNSYNSQPGFNNSR). 6 consecutive repeat copies span residues 955–958 (SRYD), 961–964 (NNNY), 972–974 (NNN), 975–978 (YSGN), 984–986 (YSG), and 996–999 (SRYD). The segment at 955-999 (SRYDGGNNNYRQNSNYRNNNYSGNRNSGQYSGNSYSRNNKQSRYD) is 2 X 4 AA repeats of S-R-Y-D, N-N-N-Y, Y-S-G-N. Over residues 959-993 (GGNNNYRQNSNYRNNNYSGNRNSGQYSGNSYSRNN) the composition is skewed to low complexity. Residues 996 to 1006 (SRYDNSRANRR) are compositionally biased toward basic and acidic residues.

Belongs to the 5'-3' exonuclease family. XRN2/RAT1 subfamily. Interacts with RAI1 and RTT103. Requires Mg(2+) as cofactor. The cofactor is Mn(2+).

It localises to the nucleus. Inhibited by nucleoside 3', 5'-bisphosphates. In terms of biological role, possesses 5'-&gt;3' exoribonuclease activity. Required for the processing of nuclear mRNA, rRNA and small nucleolar RNA (snoRNA) precursors. May promote termination of transcription by RNA polymerase II via the recruitment of 3'-end processing factors to the poly(A) site and by the degradation of nascent RNA downstream of the poly(A) site. The chain is 5'-3' exoribonuclease 2 (RAT1) from Saccharomyces cerevisiae (strain ATCC 204508 / S288c) (Baker's yeast).